The following is a 107-amino-acid chain: Iron-sulfur cluster assembly protein CyaY (107 aa).

It belongs to the frataxin family.

Involved in iron-sulfur (Fe-S) cluster assembly. May act as a regulator of Fe-S biogenesis. This Yersinia intermedia protein is Iron-sulfur cluster assembly protein CyaY.